Consider the following 485-residue polypeptide: Glutamate--tRNA ligase (485 aa).

A 'HIGH' region motif is present at residues 11-21; the sequence is PSPTGHLHIGN. The short motif at 252–256 is the 'KMSKS' region element; sequence KLSKR. Lysine 255 contacts ATP.

It belongs to the class-I aminoacyl-tRNA synthetase family. Glutamate--tRNA ligase type 1 subfamily. In terms of assembly, monomer.

It is found in the cytoplasm. It catalyses the reaction tRNA(Glu) + L-glutamate + ATP = L-glutamyl-tRNA(Glu) + AMP + diphosphate. Its function is as follows. Catalyzes the attachment of glutamate to tRNA(Glu) in a two-step reaction: glutamate is first activated by ATP to form Glu-AMP and then transferred to the acceptor end of tRNA(Glu). The chain is Glutamate--tRNA ligase from Bacillus cereus (strain ATCC 10987 / NRS 248).